The following is a 118-amino-acid chain: Aspartate 1-decarboxylase (118 aa).

Serine 25 (schiff-base intermediate with substrate; via pyruvic acid) is an active-site residue. The residue at position 25 (serine 25) is a Pyruvic acid (Ser). Substrate is bound at residue threonine 57. Tyrosine 58 serves as the catalytic Proton donor. Position 73-75 (73-75 (GAA)) interacts with substrate.

This sequence belongs to the PanD family. As to quaternary structure, heterooctamer of four alpha and four beta subunits. The cofactor is pyruvate. Post-translationally, is synthesized initially as an inactive proenzyme, which is activated by self-cleavage at a specific serine bond to produce a beta-subunit with a hydroxyl group at its C-terminus and an alpha-subunit with a pyruvoyl group at its N-terminus.

The protein localises to the cytoplasm. The catalysed reaction is L-aspartate + H(+) = beta-alanine + CO2. It participates in cofactor biosynthesis; (R)-pantothenate biosynthesis; beta-alanine from L-aspartate: step 1/1. Its function is as follows. Catalyzes the pyruvoyl-dependent decarboxylation of aspartate to produce beta-alanine. The sequence is that of Aspartate 1-decarboxylase from Caulobacter vibrioides (strain ATCC 19089 / CIP 103742 / CB 15) (Caulobacter crescentus).